Here is a 170-residue protein sequence, read N- to C-terminus: Bifunctional protein PyrR (170 aa).

The short motif at 90–102 is the PRPP-binding element; that stretch reads LVLIDDVLMSGRT.

The protein belongs to the purine/pyrimidine phosphoribosyltransferase family. PyrR subfamily.

It carries out the reaction UMP + diphosphate = 5-phospho-alpha-D-ribose 1-diphosphate + uracil. Functionally, regulates the transcription of the pyrimidine nucleotide (pyr) operon in response to exogenous pyrimidines. In terms of biological role, also displays a weak uracil phosphoribosyltransferase activity which is not physiologically significant. The polypeptide is Bifunctional protein PyrR (Pseudomonas syringae pv. syringae (strain B728a)).